Reading from the N-terminus, the 493-residue chain is UDP-glucose 6-dehydrogenase (493 aa).

Residues 11-16 (GAGYVG), Asp36, Arg41, and 89-93 (VNTPT) contribute to the NAD(+) site. A disordered region spans residues 88-110 (SVNTPTKTYGMGKGRAADLKYIE). Lys107 bears the N6-acetyllysine mark. An allosteric switch region region spans residues 129-135 (KSTVPVR). 130–132 (STV) is an NAD(+) binding site. The active-site Proton donor/acceptor is the Glu161. Residues 161–165 (EFLAE), 220–224 (KLAAN), Arg260, and 267–273 (KASVGFG) each bind substrate. Position 165 (Glu165) interacts with NAD(+). Lys220 serves as the catalytic Proton donor/acceptor. Cys276 acts as the Nucleophile in catalysis. NAD(+) is bound at residue 276 to 279 (CFQK). An important for formation of active hexamer structure region spans residues 321–325 (SLFNT). Substrate is bound at residue 338 to 339 (FK). Residue Arg346 coordinates NAD(+). Substrate is bound at residue Arg442. The disordered stretch occupies residues 466-493 (VSSKRIPYTPGEIPKFSLQDPPNKKPKV). Residue Thr474 is modified to Phosphothreonine.

It belongs to the UDP-glucose/GDP-mannose dehydrogenase family. As to quaternary structure, homohexamer.

The catalysed reaction is UDP-alpha-D-glucose + 2 NAD(+) + H2O = UDP-alpha-D-glucuronate + 2 NADH + 3 H(+). Its pathway is nucleotide-sugar biosynthesis; UDP-alpha-D-glucuronate biosynthesis; UDP-alpha-D-glucuronate from UDP-alpha-D-glucose: step 1/1. Its activity is regulated as follows. UDP-alpha-D-xylose (UDX) acts as a feedback inhibitor. It binds at the same site as the substrate, but functions as allosteric inhibitor by triggering a conformation change that disrupts the active hexameric ring structure and gives rise to an inactive, horseshoe-shaped hexamer. Its function is as follows. Catalyzes the formation of UDP-alpha-D-glucuronate, a constituent of complex glycosaminoglycans. Required for the biosynthesis of chondroitin sulfate and heparan sulfate. Required for embryonic development via its role in the biosynthesis of glycosaminoglycans. Required for proper brain and neuronal development. This Mus musculus (Mouse) protein is UDP-glucose 6-dehydrogenase (Ugdh).